The chain runs to 171 residues: uncharacterized protein (171 aa).

2 disordered regions span residues 27-53 (DCPG…KMVL) and 82-108 (GHLE…PSSS). Polar residues predominate over residues 32-50 (GNNNREPSISTRGRTSSSK).

This is an uncharacterized protein from Homo sapiens (Human).